A 358-amino-acid chain; its full sequence is Membrane-bound lytic murein transglycosylase C (358 aa).

Positions 1-16 are cleaved as a signal peptide; sequence MKKILALLVIAPLLVS. Cys17 carries the N-palmitoyl cysteine lipid modification. Cys17 carries S-diacylglycerol cysteine lipidation.

The protein belongs to the transglycosylase Slt family.

It localises to the cell outer membrane. It catalyses the reaction Exolytic cleavage of the (1-&gt;4)-beta-glycosidic linkage between N-acetylmuramic acid (MurNAc) and N-acetylglucosamine (GlcNAc) residues in peptidoglycan, from either the reducing or the non-reducing ends of the peptidoglycan chains, with concomitant formation of a 1,6-anhydrobond in the MurNAc residue.. In terms of biological role, murein-degrading enzyme. May play a role in recycling of muropeptides during cell elongation and/or cell division. The chain is Membrane-bound lytic murein transglycosylase C from Yersinia enterocolitica serotype O:8 / biotype 1B (strain NCTC 13174 / 8081).